Here is a 462-residue protein sequence, read N- to C-terminus: Argininosuccinate lyase (462 aa).

Belongs to the lyase 1 family. Argininosuccinate lyase subfamily.

Its subcellular location is the cytoplasm. The enzyme catalyses 2-(N(omega)-L-arginino)succinate = fumarate + L-arginine. It participates in amino-acid biosynthesis; L-arginine biosynthesis; L-arginine from L-ornithine and carbamoyl phosphate: step 3/3. The polypeptide is Argininosuccinate lyase (Bacillus cereus (strain ATCC 10987 / NRS 248)).